The following is a 236-amino-acid chain: 2-C-methyl-D-erythritol 4-phosphate cytidylyltransferase (236 aa).

Belongs to the IspD/TarI cytidylyltransferase family. IspD subfamily. In terms of assembly, homodimer.

It carries out the reaction 2-C-methyl-D-erythritol 4-phosphate + CTP + H(+) = 4-CDP-2-C-methyl-D-erythritol + diphosphate. Its pathway is isoprenoid biosynthesis; isopentenyl diphosphate biosynthesis via DXP pathway; isopentenyl diphosphate from 1-deoxy-D-xylulose 5-phosphate: step 2/6. In terms of biological role, catalyzes the formation of 4-diphosphocytidyl-2-C-methyl-D-erythritol from CTP and 2-C-methyl-D-erythritol 4-phosphate (MEP). In Enterobacter sp. (strain 638), this protein is 2-C-methyl-D-erythritol 4-phosphate cytidylyltransferase.